The following is a 78-amino-acid chain: Acyl carrier protein (78 aa).

Positions 2–77 (SDIAERVKKI…DAVKFIEKAQ (76 aa)) constitute a Carrier domain. O-(pantetheine 4'-phosphoryl)serine is present on Ser-37.

Belongs to the acyl carrier protein (ACP) family. In terms of processing, 4'-phosphopantetheine is transferred from CoA to a specific serine of apo-ACP by AcpS. This modification is essential for activity because fatty acids are bound in thioester linkage to the sulfhydryl of the prosthetic group.

It is found in the cytoplasm. Its pathway is lipid metabolism; fatty acid biosynthesis. Its function is as follows. Carrier of the growing fatty acid chain in fatty acid biosynthesis. This is Acyl carrier protein from Rhizobium etli (strain CIAT 652).